The primary structure comprises 198 residues: Recombination protein RecR (198 aa).

A C4-type zinc finger spans residues 59-74 (CSLCCNYTDHDPCPIC). Residues 82–175 (TLLCIVEQPR…KVTRIAHGLP (94 aa)) enclose the Toprim domain.

It belongs to the RecR family.

In terms of biological role, may play a role in DNA repair. It seems to be involved in an RecBC-independent recombinational process of DNA repair. It may act with RecF and RecO. This Desulfitobacterium hafniense (strain DSM 10664 / DCB-2) protein is Recombination protein RecR.